A 545-amino-acid polypeptide reads, in one-letter code: Chaperonin GroEL (545 aa).

ATP-binding positions include 29-32 (TIGP), 86-90 (DGTTT), Gly-413, 478-480 (NAA), and Asp-494.

Belongs to the chaperonin (HSP60) family. In terms of assembly, forms a cylinder of 14 subunits composed of two heptameric rings stacked back-to-back. Interacts with the co-chaperonin GroES.

It localises to the cytoplasm. It carries out the reaction ATP + H2O + a folded polypeptide = ADP + phosphate + an unfolded polypeptide.. Functionally, together with its co-chaperonin GroES, plays an essential role in assisting protein folding. The GroEL-GroES system forms a nano-cage that allows encapsulation of the non-native substrate proteins and provides a physical environment optimized to promote and accelerate protein folding. The protein is Chaperonin GroEL of Exiguobacterium sibiricum (strain DSM 17290 / CCUG 55495 / CIP 109462 / JCM 13490 / 255-15).